The chain runs to 66 residues: Ranalexin (66 aa).

The N-terminal stretch at 1-20 is a signal peptide; that stretch reads MFTLKKSLLLLFFLGTINLS. A propeptide spans 21–44 (small acidic peptide); it reads LCEEERNAEEERRDNPDERDVEVE. A disulfide bridge links C60 with C66.

It belongs to the frog skin active peptide (FSAP) family. Brevinin subfamily. In terms of tissue distribution, expressed by the skin dorsal glands.

The protein localises to the secreted. Its function is as follows. Potent microbicidal activity, active against S.aureus and E.coli. It also acts as a membrane-disruptive agent at higher concentrations. The protein is Ranalexin of Aquarana catesbeiana (American bullfrog).